Consider the following 101-residue polypeptide: Small ribosomal subunit protein uS10 (101 aa).

Belongs to the universal ribosomal protein uS10 family. As to quaternary structure, part of the 30S ribosomal subunit.

In terms of biological role, involved in the binding of tRNA to the ribosomes. This is Small ribosomal subunit protein uS10 from Cytophaga hutchinsonii (strain ATCC 33406 / DSM 1761 / CIP 103989 / NBRC 15051 / NCIMB 9469 / D465).